Consider the following 278-residue polypeptide: Digeranylgeranylglyceryl phosphate synthase (278 aa).

Transmembrane regions (helical) follow at residues 15 to 35 (VIGS…WKIV), 36 to 56 (PIKL…GYII), 89 to 109 (IVLF…AFII), 133 to 153 (LIVA…FFEG), 159 to 179 (TLIP…VKGI), 203 to 223 (WFIS…PYFF), 225 to 245 (FNII…LVVL), and 258 to 278 (AYMK…TLPI).

It belongs to the UbiA prenyltransferase family. DGGGP synthase subfamily. Mg(2+) serves as cofactor.

The protein resides in the cell membrane. The enzyme catalyses sn-3-O-(geranylgeranyl)glycerol 1-phosphate + (2E,6E,10E)-geranylgeranyl diphosphate = 2,3-bis-O-(geranylgeranyl)-sn-glycerol 1-phosphate + diphosphate. The protein operates within membrane lipid metabolism; glycerophospholipid metabolism. Its function is as follows. Prenyltransferase that catalyzes the transfer of the geranylgeranyl moiety of geranylgeranyl diphosphate (GGPP) to the C2 hydroxyl of (S)-3-O-geranylgeranylglyceryl phosphate (GGGP). This reaction is the second ether-bond-formation step in the biosynthesis of archaeal membrane lipids. In Sulfurisphaera tokodaii (strain DSM 16993 / JCM 10545 / NBRC 100140 / 7) (Sulfolobus tokodaii), this protein is Digeranylgeranylglyceryl phosphate synthase.